The sequence spans 471 residues: Cleavage and polyadenylation specificity factor subunit 7 (471 aa).

The tract at residues 34 to 68 (VLTAASQPSDDRSSSTEPPPPVRQEPAPKPNNKTP) is disordered. The span at 50-62 (EPPPPVRQEPAPK) shows a compositional bias: pro residues. In terms of domain architecture, RRM spans 82-162 (AAVYVGSFSW…EKVDVRPATR (81 aa)). Residues 176-220 (ECVRVPRGGIPPRAHSRDSSDSADGRATPSENLVPSSARVDKPPS) form a disordered region. Residues 190–199 (HSRDSSDSAD) are compositionally biased toward basic and acidic residues. At threonine 203 the chain carries Phosphothreonine. A Phosphoserine modification is found at serine 205. A Glycyl lysine isopeptide (Lys-Gly) (interchain with G-Cter in SUMO2) cross-link involves residue lysine 354. Residues 409–471 (SVGASGSSSR…HRDRERDRHH (63 aa)) are disordered. Phosphoserine occurs at positions 413 and 423. Residues 418-469 (RKRHRSRERSPSRSRESSRRHRDLLHNEDRHDDYFQERNREHERHRDRERDR) are arg/Ser-rich domain. Basic and acidic residues-rich tracts occupy residues 425–434 (ERSPSRSRES) and 441–471 (LLHNEDRHDDYFQERNREHERHRDRERDRHH).

This sequence belongs to the RRM CPSF6/7 family. Component of the cleavage factor Im (CFIm) complex which is a heterotetramer composed of two subunits of NUDT21/CPSF5 and two subunits of CPSF6 or CPSF7 or a heterodimer of CPSF6 and CPSF7. The cleavage factor Im (CFIm) complex associates with the CPSF and CSTF complexes to promote the assembly of the core mRNA 3'-processing machinery. Interacts with NUDT21/CPSF5. Interacts (via Arg/Ser-rich domain) with FIP1L1 (preferentially via unphosphorylated form and Arg/Glu/Asp-rich region); this interaction mediates, at least in part, the interaction between the CFIm and CPSF complexes and may be inhibited by CPSF7 hyper-phosphorylation. Phosphorylated. Post-translationally, asymmetrically dimethylated on arginine residues by PRMT1.

The protein localises to the nucleus. It localises to the cytoplasm. In terms of biological role, component of the cleavage factor Im (CFIm) complex that functions as an activator of the pre-mRNA 3'-end cleavage and polyadenylation processing required for the maturation of pre-mRNA into functional mRNAs. CFIm contributes to the recruitment of multiprotein complexes on specific sequences on the pre-mRNA 3'-end, so called cleavage and polyadenylation signals (pA signals). Most pre-mRNAs contain multiple pA signals, resulting in alternative cleavage and polyadenylation (APA) producing mRNAs with variable 3'-end formation. The CFIm complex acts as a key regulator of cleavage and polyadenylation site choice during APA through its binding to 5'-UGUA-3' elements localized in the 3'-untranslated region (UTR) for a huge number of pre-mRNAs. CPSF7 activates directly the mRNA 3'-processing machinery. Binds to pA signals in RNA substrates. In Mus musculus (Mouse), this protein is Cleavage and polyadenylation specificity factor subunit 7.